The sequence spans 389 residues: Trans-2-enoyl-CoA reductase [NADH] (389 aa).

Residues 47-52 (GASTGY), 73-74 (FE), 110-111 (DA), and 138-139 (LA) each bind NAD(+). Residue Tyr224 participates in substrate binding. Tyr234 acts as the Proton donor in catalysis. NAD(+) is bound by residues Lys243 and 272-274 (LVT).

The protein belongs to the TER reductase family. In terms of assembly, monomer.

It catalyses the reaction a 2,3-saturated acyl-CoA + NAD(+) = a (2E)-enoyl-CoA + NADH + H(+). It participates in lipid metabolism; fatty acid biosynthesis. Its function is as follows. Involved in the fatty acid synthesis (FAS II). Catalyzes the reduction of a carbon-carbon double bond in an enoyl moiety that is covalently linked to a coenzyme A (CoA). This Clostridium perfringens (strain SM101 / Type A) protein is Trans-2-enoyl-CoA reductase [NADH].